Reading from the N-terminus, the 425-residue chain is Histone-binding protein RBBP7 (425 aa).

Position 2 is an N-acetylalanine (A2). S3 bears the Phosphoserine mark. K4 bears the N6-acetyllysine; alternate mark. Residue K4 forms a Glycyl lysine isopeptide (Lys-Gly) (interchain with G-Cter in SUMO2); alternate linkage. K4 participates in a covalent cross-link: Glycyl lysine isopeptide (Lys-Gly) (interchain with G-Cter in ubiquitin); alternate. The residue at position 10 (T10) is a Phosphothreonine. Phosphoserine occurs at positions 13 and 95. WD repeat units lie at residues 47–122 (QWLP…KINH), 128–173 (RARY…LRLR), 181–217 (GLSW…KIVD), 228–269 (VVED…HLVD), 275–312 (VNCL…LHTF), 318–369 (EIFQ…LFIH), and 376–403 (ISDF…IWQM). K101 is covalently cross-linked (Glycyl lysine isopeptide (Lys-Gly) (interchain with G-Cter in SUMO2)). Position 119 is an N6-acetyllysine (K119). K155 participates in a covalent cross-link: Glycyl lysine isopeptide (Lys-Gly) (interchain with G-Cter in SUMO2). Residue K159 is modified to N6-acetyllysine; alternate. Residue K159 forms a Glycyl lysine isopeptide (Lys-Gly) (interchain with G-Cter in SUMO2); alternate linkage. Residue S354 is modified to Phosphoserine.

This sequence belongs to the WD repeat RBAP46/RBAP48/MSI1 family. As to quaternary structure, binds directly to helix 1 of the histone fold of histone H4, a region that is not accessible when H4 is in chromatin. Subunit of the type B histone acetyltransferase (HAT) complex, composed of RBBP7 and HAT1. Subunit of the core histone deacetylase (HDAC) complex, which is composed of HDAC1, HDAC2, RBBP4 and RBBP7. The core HDAC complex associates with SIN3A, ARID4B/SAP180, SAP18, SAP30, SAP130, SUDS3/SAP45 and possibly ARID4A/RBP1 and ING1 to form the SIN3 HDAC complex. Component of the nucleosome remodeling and deacetylase (NuRD) repressor complex, composed of core proteins MTA1, MTA2, MTA3, RBBP4, RBBP7, HDAC1, HDAC2, MBD2, MBD3, and peripherally associated proteins CDK2AP1, CDK2AP2, GATAD2A, GATAD2B, CHD3, CHD4 and CHD5. The exact stoichiometry of the NuRD complex is unknown, and some subunits such as MBD2 and MBD3, GATAD2A and GATAD2B, and CHD3, CHD4 and CHD5 define mutually exclusive NuRD complexes. The NuRD complex may interact with MBD3L1. The NuRD complex may interact with MBD3L2. Subunit of the PRC2/EED-EZH2 complex, which is composed of at least EED, EZH2, RBBP4, RBBP7 and SUZ12. The PRC2/EED-EZH2 complex may also associate with HDAC1. Component of the NURF-1 ISWI chromatin remodeling complex (also called the nucleosome-remodeling factor (NURF) complex) at least composed of SMARCA1 (isoform 2), BPTF, RBBP4 and RBBP7. Within the complex interacts with isoform 2 of SMARCA1. Component of the BPFT-SMARCA1 complex at least composed of SMARCA1 (isoform 1), BPFT, RBBP4 and RBBP7; the complex is catalytically inactive and does not remodel chromatin. Within the complex interacts with isoform 1 of SMARCA1. Interacts with BRCA1. Interacts with CDK2AP1. Interacts with CENPA. Interacts with CHD3. Interacts with CHD4. Interacts with CREBBP, and this interaction may be enhanced by the binding of phosphorylated CREB1 to CREBBP. Interacts with HDAC7. Interacts with MTA1. Interacts with PWWP2B. Interacts with RB1 (via viral protein-binding domain). Interacts with SUV39H1.

Its subcellular location is the nucleus. Core histone-binding subunit that may target chromatin remodeling factors, histone acetyltransferases and histone deacetylases to their histone substrates in a manner that is regulated by nucleosomal DNA. Component of several complexes which regulate chromatin metabolism. These include the type B histone acetyltransferase (HAT) complex, which is required for chromatin assembly following DNA replication; the core histone deacetylase (HDAC) complex, which promotes histone deacetylation and consequent transcriptional repression; the nucleosome remodeling and histone deacetylase complex (the NuRD complex), which promotes transcriptional repression by histone deacetylation and nucleosome remodeling; and the PRC2/EED-EZH2 complex, which promotes repression of homeotic genes during development; and the NURF (nucleosome remodeling factor) complex. In Homo sapiens (Human), this protein is Histone-binding protein RBBP7 (RBBP7).